The sequence spans 146 residues: 3-dehydroquinate dehydratase (146 aa).

Y22 (proton acceptor) is an active-site residue. Residues N74, H80, and D87 each contribute to the substrate site. Residue H100 is the Proton donor of the active site. Residues 101–102 and R111 each bind substrate; that span reads LS.

Belongs to the type-II 3-dehydroquinase family. Homododecamer.

It carries out the reaction 3-dehydroquinate = 3-dehydroshikimate + H2O. It functions in the pathway metabolic intermediate biosynthesis; chorismate biosynthesis; chorismate from D-erythrose 4-phosphate and phosphoenolpyruvate: step 3/7. Catalyzes a trans-dehydration via an enolate intermediate. The chain is 3-dehydroquinate dehydratase from Clostridium perfringens (strain 13 / Type A).